The sequence spans 98 residues: uncharacterized protein (98 aa).

Positions 37 to 91 (LITSRQQLGISQKQLETLSGVKQPMIARIEKGQTNPQLETLLKLLAPLGKTLSIV) constitute an HTH cro/C1-type domain. Positions 48-67 (QKQLETLSGVKQPMIARIEK) form a DNA-binding region, H-T-H motif.

This is an uncharacterized protein from Haemophilus influenzae (strain ATCC 51907 / DSM 11121 / KW20 / Rd).